A 503-amino-acid chain; its full sequence is Protein phosphatase eya-1 (503 aa).

D237 acts as the Nucleophile in catalysis. Residues D237 and D239 each contribute to the Mg(2+) site. D239 serves as the catalytic Proton donor.

It belongs to the HAD-like hydrolase superfamily. EYA family. As to quaternary structure, interacts (via C-terminus) with ceh-34 (via N-terminus). It depends on Mg(2+) as a cofactor. Expressed in body wall muscles. Expressed in BAG sensory neurons and in other head neurons.

The protein localises to the nucleus. The catalysed reaction is O-phospho-L-tyrosyl-[protein] + H2O = L-tyrosyl-[protein] + phosphate. Functionally, tyrosine protein phosphatase. Acts probably as a transcription regulator in the embryonic and postembryonic development of several tissues including pharynx, vulva and gonads. Required for the development of anterior tissues during late embryogenesis. Together with ceh-34, required to specify the coelomocyte fate in embryonic and postembryonic precursors. In the anterior part of the embryo, prevents apoptosis in cells that are not fated to die. Together with ceh-34 activates proapoptotic factor egl-1 expression to promote motor neuron M4 sister cell apoptosis. Also promotes apoptosis of I1 pharyngeal neuron sister cell. Plays a role in locomotion and fertility. May play a role in resistance to heat and oxidative stresses. May cooperate with the transcription factors vab-3 and ceh-32 to repress transcription factor ets-5 expression in non BAG neuronal cells. In Caenorhabditis elegans, this protein is Protein phosphatase eya-1.